Consider the following 490-residue polypeptide: Cytochrome P450 2C12, female-specific (490 aa).

Cys-435 contacts heme.

The protein belongs to the cytochrome P450 family. Heme is required as a cofactor.

It is found in the endoplasmic reticulum membrane. The protein resides in the microsome membrane. The catalysed reaction is an organic molecule + reduced [NADPH--hemoprotein reductase] + O2 = an alcohol + oxidized [NADPH--hemoprotein reductase] + H2O + H(+). In terms of biological role, this P450 is active in 15-beta-hydroxylation of steroid sulfates. The chain is Cytochrome P450 2C12, female-specific (Cyp2c12) from Rattus norvegicus (Rat).